The chain runs to 148 residues: 3-hydroxyacyl-[acyl-carrier-protein] dehydratase FabZ (148 aa).

The active site involves His-48.

The protein belongs to the thioester dehydratase family. FabZ subfamily.

The protein resides in the cytoplasm. It catalyses the reaction a (3R)-hydroxyacyl-[ACP] = a (2E)-enoyl-[ACP] + H2O. In terms of biological role, involved in unsaturated fatty acids biosynthesis. Catalyzes the dehydration of short chain beta-hydroxyacyl-ACPs and long chain saturated and unsaturated beta-hydroxyacyl-ACPs. The chain is 3-hydroxyacyl-[acyl-carrier-protein] dehydratase FabZ from Acinetobacter baylyi (strain ATCC 33305 / BD413 / ADP1).